The sequence spans 273 residues: Dermonecrotic toxin LapSicTox-alphaIB1aii (273 aa).

His-5 is an active-site residue. Mg(2+) contacts are provided by Glu-25 and Asp-27. The Nucleophile role is filled by His-41. Cystine bridges form between Cys-45-Cys-51 and Cys-47-Cys-190. Asp-85 serves as a coordination point for Mg(2+). Residue Asn-250 is glycosylated (N-linked (GlcNAc...) asparagine).

It belongs to the arthropod phospholipase D family. Class II subfamily. Mg(2+) serves as cofactor. Expressed by the venom gland.

It localises to the secreted. It catalyses the reaction an N-(acyl)-sphingosylphosphocholine = an N-(acyl)-sphingosyl-1,3-cyclic phosphate + choline. It carries out the reaction an N-(acyl)-sphingosylphosphoethanolamine = an N-(acyl)-sphingosyl-1,3-cyclic phosphate + ethanolamine. The catalysed reaction is a 1-acyl-sn-glycero-3-phosphocholine = a 1-acyl-sn-glycero-2,3-cyclic phosphate + choline. The enzyme catalyses a 1-acyl-sn-glycero-3-phosphoethanolamine = a 1-acyl-sn-glycero-2,3-cyclic phosphate + ethanolamine. Its function is as follows. Dermonecrotic toxins cleave the phosphodiester linkage between the phosphate and headgroup of certain phospholipids (sphingolipid and lysolipid substrates), forming an alcohol (often choline) and a cyclic phosphate. This toxin acts on sphingomyelin (SM). It may also act on ceramide phosphoethanolamine (CPE), lysophosphatidylcholine (LPC) and lysophosphatidylethanolamine (LPE), but not on lysophosphatidylserine (LPS), and lysophosphatidylglycerol (LPG). It acts by transphosphatidylation, releasing exclusively cyclic phosphate products as second products. Induces dermonecrosis, hemolysis, increased vascular permeability, edema, inflammatory response, and platelet aggregation. The sequence is that of Dermonecrotic toxin LapSicTox-alphaIB1aii from Loxosceles apachea (Apache recluse spider).